The sequence spans 131 residues: Profilin-1 (131 aa).

A disulfide bridge links Cys13 with Cys115. The Involved in PIP2 interaction motif lies at 81–97 (AVIRGKKGSGGITVKKT). Phosphothreonine is present on Thr111.

This sequence belongs to the profilin family. In terms of assembly, multimer. Occurs in many kinds of cells as a complex with monomeric actin in a 1:1 ratio. Post-translationally, phosphorylated by MAP kinases. In terms of tissue distribution, pollen specific.

It localises to the cytoplasm. The protein resides in the cytoskeleton. Binds to actin and affects the structure of the cytoskeleton. At high concentrations, profilin prevents the polymerization of actin, whereas it enhances it at low concentrations. By binding to PIP2, it inhibits the formation of IP3 and DG. The chain is Profilin-1 (PRO1) from Zea mays (Maize).